Consider the following 70-residue polypeptide: Prokaryotic ubiquitin-like protein UBact (70 aa).

Composition is skewed to basic and acidic residues over residues 1–15 and 24–50; these read MPDQ…RKQG and TRHD…RDPG. The tract at residues 1–70 is disordered; sequence MPDQRQQERS…RQQRREQSGE (70 aa). Glu-70 participates in a covalent cross-link: Isoglutamyl lysine isopeptide (Glu-Lys) (interchain with K-? in acceptor proteins).

The protein belongs to the ubiquitin-like protein UBact family.

In terms of biological role, may function as a protein modifier covalently attached to lysine residues of substrate proteins. This may serve to target the modified proteins for degradation by proteasomes. The protein is Prokaryotic ubiquitin-like protein UBact of Terrybacteria sp. (strain RIFCSPHIGHO2_01_FULL_58_15).